A 197-amino-acid chain; its full sequence is Adrenodoxin-like protein 2, mitochondrial (197 aa).

A mitochondrion-targeting transit peptide spans 1–74 (MVFHRLSRLG…TSFSTTSEKG (74 aa)). One can recognise a 2Fe-2S ferredoxin-type domain in the interval 81–184 (INVTFVDKDG…GVRLAIPSAT (104 aa)). [2Fe-2S] cluster contacts are provided by C118, C124, C127, and C165.

Belongs to the adrenodoxin/putidaredoxin family. It depends on [2Fe-2S] cluster as a cofactor.

The protein localises to the mitochondrion. Its function is as follows. Associates with the adrenodoxin reductase MFDR to form an efficient low potential electron transfer chain that is able to reduce cytochrome C. In Arabidopsis thaliana (Mouse-ear cress), this protein is Adrenodoxin-like protein 2, mitochondrial.